The following is a 69-amino-acid chain: Protein transport protein Sec61 subunit gamma-3 (69 aa).

At Met-1 the chain carries N-acetylmethionine. The Cytoplasmic segment spans residues 1–32 (MEAIDSAIDPLRDFAKSSVRLVQRCHKPDRKE). Residues 33–61 (FTKVAVRTAIGFVVMGFVGFFVKLVFIPI) traverse the membrane as a helical segment. The Extracellular segment spans residues 62–69 (NNIIVGSS).

It belongs to the SecE/SEC61-gamma family. Heterotrimeric complex composed of SEC61-alpha, SEC61-beta and SEC61-gamma.

The protein localises to the endoplasmic reticulum membrane. Its function is as follows. Necessary for protein translocation in the endoplasmic reticulum. The polypeptide is Protein transport protein Sec61 subunit gamma-3 (SEC61G3) (Arabidopsis thaliana (Mouse-ear cress)).